Consider the following 338-residue polypeptide: Short-chain dehydrogenase/reductase phmF (338 aa).

NADP(+) is bound by residues Leu-46, Arg-71, Asp-96, and Asn-123. The active-site Proton donor is Ser-177. The NADP(+) site is built by Tyr-211 and Lys-215. Residue Tyr-211 is the Proton acceptor of the active site. Lys-215 functions as the Lowers pKa of active site Tyr in the catalytic mechanism.

The protein belongs to the short-chain dehydrogenases/reductases (SDR) family.

The protein operates within mycotoxin biosynthesis. In terms of biological role, short-chain dehydrogenase/reductase; part of the gene cluster that mediates the biosynthesis of the mycotoxins phomacins, leucine-derived cytochalasans with potent actin polymerization-inhibitory activities and monocot-specific antigerminative activities. The first step in the pathway is catalyzed by the hybrid PKS-NRPS phmA, assisted by the enoyl reductase phmE, that are responsible for fusion of the leucine precursor and the polyketide backbone to produce a 2-pyrrolidone intermediate. The polyketide synthase module (PKS) of phmA is responsible for the synthesis of the polyketide backbone and the downstream nonribosomal peptide synthetase (NRPS) amidates the carboxyl end of the polyketide with the leucine precursor. Because phmA lacks a designated enoylreductase (ER) domain, the required activity is provided the enoyl reductase phmE. Reduction by the hydrolyase phmG, followed by dehydration and intra-molecular Diels-Alder cyclization by the Diels-Alderase phmD then yield the required isoindolone-fused macrocycle. A number of oxidative steps catalyzed by the tailoring cytochrome P450 monooxygenase phmB, the FAD-linked oxidoreductase phmC and the short-chain dehydrogenase/reductase phmF, are further required to afford the final products, phomacin D and phomacin E. The polypeptide is Short-chain dehydrogenase/reductase phmF (Phaeosphaeria nodorum (strain SN15 / ATCC MYA-4574 / FGSC 10173) (Glume blotch fungus)).